We begin with the raw amino-acid sequence, 631 residues long: FAST kinase domain-containing protein 4 (631 aa).

A mitochondrion-targeting transit peptide spans 1–107 (MAAHLVKRCT…NQAAMVLIRL (107 aa)). S553 carries the phosphoserine modification. An RAP domain is found at 561-619 (LAFLRWEFPNFNSRSKDLLGRFVLARRHIVAAGFLIVDVPFYEWLELKSEWQKGAYLKD).

Belongs to the FAST kinase family. Ubiquitously expressed. Expression detected in spleen, thymus, testis, ovary, colon, heart, smooth muscle, kidney, brain, lung, liver and white adipose tissue with highest expression in smooth muscle.

Its subcellular location is the mitochondrion matrix. Functionally, plays a role in processing of mitochondrial RNA precursors and in stabilization of a subset of mature mitochondrial RNA species, such as MT-CO1, MT-CO2, MT-CYB, MT-CO3, MT-ND3, MT-ND5 and MT-ATP8/6. May play a role in cell cycle progression. This chain is FAST kinase domain-containing protein 4, found in Homo sapiens (Human).